The chain runs to 542 residues: CTP synthase (542 aa).

Residues 1-265 (MARYVFITGG…DSEVLSAFGI (265 aa)) are amidoligase domain. Serine 13 is a CTP binding site. Residue serine 13 coordinates UTP. 14-19 (SLGKGI) contacts ATP. Position 54 (tyrosine 54) interacts with L-glutamine. Residue aspartate 71 coordinates ATP. 2 residues coordinate Mg(2+): aspartate 71 and glutamate 139. Residues 146–148 (DIE), 186–191 (KTKPTQ), and lysine 222 contribute to the CTP site. UTP-binding positions include 186-191 (KTKPTQ) and lysine 222. Residues 291–541 (TIAVVGKYTG…IEAAIEQSRL (251 aa)) enclose the Glutamine amidotransferase type-1 domain. Glycine 353 lines the L-glutamine pocket. Cysteine 380 acts as the Nucleophile; for glutamine hydrolysis in catalysis. L-glutamine is bound by residues 381–384 (FGMQ), glutamate 404, and arginine 469. Residues histidine 514 and glutamate 516 contribute to the active site.

It belongs to the CTP synthase family. As to quaternary structure, homotetramer.

The enzyme catalyses UTP + L-glutamine + ATP + H2O = CTP + L-glutamate + ADP + phosphate + 2 H(+). It catalyses the reaction L-glutamine + H2O = L-glutamate + NH4(+). The catalysed reaction is UTP + NH4(+) + ATP = CTP + ADP + phosphate + 2 H(+). It participates in pyrimidine metabolism; CTP biosynthesis via de novo pathway; CTP from UDP: step 2/2. Its activity is regulated as follows. Allosterically activated by GTP, when glutamine is the substrate; GTP has no effect on the reaction when ammonia is the substrate. The allosteric effector GTP functions by stabilizing the protein conformation that binds the tetrahedral intermediate(s) formed during glutamine hydrolysis. Inhibited by the product CTP, via allosteric rather than competitive inhibition. Catalyzes the ATP-dependent amination of UTP to CTP with either L-glutamine or ammonia as the source of nitrogen. Regulates intracellular CTP levels through interactions with the four ribonucleotide triphosphates. The protein is CTP synthase of Brucella abortus (strain 2308).